The sequence spans 417 residues: Tyrosine--tRNA ligase (417 aa).

Tyr39 contacts L-tyrosine. Residues 44 to 53 (PTASSLHVGH) carry the 'HIGH' region motif. L-tyrosine contacts are provided by Tyr176 and Gln180. The short motif at 236–240 (KMGKS) is the 'KMSKS' region element. Residue Lys239 coordinates ATP. Residues 350 to 416 (VGVLSLIVRA…GKKKHVLVRP (67 aa)) form the S4 RNA-binding domain.

The protein belongs to the class-I aminoacyl-tRNA synthetase family. TyrS type 1 subfamily. As to quaternary structure, homodimer.

It is found in the cytoplasm. It carries out the reaction tRNA(Tyr) + L-tyrosine + ATP = L-tyrosyl-tRNA(Tyr) + AMP + diphosphate + H(+). Its function is as follows. Catalyzes the attachment of tyrosine to tRNA(Tyr) in a two-step reaction: tyrosine is first activated by ATP to form Tyr-AMP and then transferred to the acceptor end of tRNA(Tyr). This is Tyrosine--tRNA ligase from Agrobacterium fabrum (strain C58 / ATCC 33970) (Agrobacterium tumefaciens (strain C58)).